Reading from the N-terminus, the 1007-residue chain is MEQAGTRPAATEHPRLRRPMPWLLLLPLLLLLLLLLPGPAASQLRYSVPEEQAPGALVGNVARALGLELRRLGPGCLRINHLGAPSPRYLELDLTSGALFVNERIDREALCEQRPRCLLSLEVLAHNPVAVSAVEVEILDINDNSPRFPRPNYQLQVSESVAPGARFHIESAQDPDVGANSVQTYELSPSEHFELDLKPLQENSKVLELVLRKGLDREQAALHHLVLTAVDGGIPARSGTAQISVRVLDTNDNSPAFDQSTYRVQLREDSPPGTLVVKLNASDPDEGSNGELRYSLSSYTSDRERQLFSIDASTGEVRVIGGLDYEEASSYQIYVQATDRGPVPMAGHCKVLVDIVDVNDNAPEVVLTDLYSPVPENATPNTIVAVLSVNDQDSGPNRKVSLGLEATLPFRLNGFGNSYTLVVSGPLDRERVAVYNITVTATDGGIPQLTSLRTLKVEISDINDNPPSFLEDSYSIYIQENNLPGVLLCTVQATDPDEKENAEVTYSLLEREIQGLPVTSYVSINSASGSLYAVNSFDYEKFREFFVTVEAQDKGNPPLSSTGTANVYVVDMNDHAPHILYPSSTNSSAAFEMGPRTAPAGYLVTKVIAMDSDSGQNAWLFYHLAQTSDLDLFKVELHTGEIRTTRKMGDESGSTFNLTVVVRDNGEPSLSASVAITVAVVDRVSKILPDTQRHVKSPRTYSEITLYLIIALSTVSFIFLLTIIILSIIKCYRYTAYGTACCGGFCGVRERSPAELYKQANNNIDARIPHGLKVQPHFIEVRGNGSLTKTYCYKACLTAGSGSDTFMFYNTGAQTGPGPSGAQAAVTDSRNLTGQSGQNAGNLIILKNEAVSQNEPRQPNPDWRYSASLRAGMHSSVHLEEAGILRAGPGGPDQQWPTVSSATPEPEAGEVSPPVGAGVNSNSWTFKYGPGNPKQSGPGELPDKFIIPGSPAIISIRQEPANSQIDKSDFITFGKKEETKKKKKKKKGNKTQEKKEKGNSTTDNSDQ.

The first 42 residues, 1–42 (MEQAGTRPAATEHPRLRRPMPWLLLLPLLLLLLLLLPGPAAS), serve as a signal peptide directing secretion. 5 consecutive Cadherin domains span residues 43–148 (QLRY…SPRF), 149–257 (PRPN…SPAF), 258–365 (DQST…APEV), 374–469 (VPEN…PPSF), and 470–579 (LEDS…APHI). At 43-708 (QLRYSVPEEQ…RTYSEITLYL (666 aa)) the chain is on the extracellular side. N-linked (GlcNAc...) asparagine glycosylation is found at Asn-280 and Asn-436. 2 N-linked (GlcNAc...) asparagine glycosylation sites follow: Asn-586 and Asn-657. The Cadherin 6 domain occupies 594-691 (GPRTAPAGYL…DRVSKILPDT (98 aa)). Residues 709–729 (IIALSTVSFIFLLTIIILSII) form a helical membrane-spanning segment. The Cytoplasmic segment spans residues 730 to 1007 (KCYRYTAYGT…GNSTTDNSDQ (278 aa)). 4 PXXP repeats span residues 856–859 (PRQP), 889–892 (PGGP), 930–933 (PGNP), and 948–951 (PGSP). Residues 856–951 (PRQPNPDWRY…PDKFIIPGSP (96 aa)) are 4 X 4 AA repeats of P-X-X-P. The disordered stretch occupies residues 885-1007 (LRAGPGGPDQ…GNSTTDNSDQ (123 aa)). Residues 966-980 (DKSDFITFGKKEETK) are compositionally biased toward basic and acidic residues.

It is found in the cell membrane. In terms of biological role, potential calcium-dependent cell-adhesion protein. May be involved in the establishment and maintenance of specific neuronal connections in the brain. The protein is Protocadherin alpha-C2 (PCDHAC2) of Pan troglodytes (Chimpanzee).